The primary structure comprises 686 residues: Rhophilin-2 (686 aa).

In terms of domain architecture, REM-1 spans 26–100 (NPLAQTGRSK…LEGLNISVGV (75 aa)). The interaction with Rho stretch occupies residues 46 to 66 (QILKAVRMRTGAENLLKVATN). The BRO1 domain occupies 111 to 460 (PLIPLGLKET…RLKYAQHQDD (350 aa)). A PDZ domain is found at 515–593 (RSIHFTAEEG…DGVEMKVVSL (79 aa)). Thr655 bears the Phosphothreonine mark.

The protein belongs to the RHPN family. Interacts with GTP-bound RhoA and RhoB. Interacts with both GTP- and GDP-bound RhoA. Interacts with KRT18. As to expression, mainly expressed in thyroid.

It is found in the cytoplasm. The protein localises to the perinuclear region. Its function is as follows. Binds specifically to GTP-Rho. May function in a Rho pathway to limit stress fiber formation and/or increase the turnover of F-actin structures in the absence of high levels of RhoA activity. In Canis lupus familiaris (Dog), this protein is Rhophilin-2 (RHPN2).